The sequence spans 223 residues: Serine/threonine/tyrosine-interacting protein A (223 aa).

In terms of domain architecture, Tyrosine-protein phosphatase spans E28–A176.

Belongs to the protein-tyrosine phosphatase family. Non-receptor class subfamily.

Its function is as follows. Catalytically inactive phosphatase. The sequence is that of Serine/threonine/tyrosine-interacting protein A (styx-a) from Xenopus laevis (African clawed frog).